Reading from the N-terminus, the 311-residue chain is tRNA dimethylallyltransferase (311 aa).

ATP is bound at residue 16-23; it reads GPTASGKS. Position 18-23 (18-23) interacts with substrate; that stretch reads TASGKS. The interval 41–44 is interaction with substrate tRNA; sequence DSMQ.

Belongs to the IPP transferase family. Monomer. Requires Mg(2+) as cofactor.

It catalyses the reaction adenosine(37) in tRNA + dimethylallyl diphosphate = N(6)-dimethylallyladenosine(37) in tRNA + diphosphate. Functionally, catalyzes the transfer of a dimethylallyl group onto the adenine at position 37 in tRNAs that read codons beginning with uridine, leading to the formation of N6-(dimethylallyl)adenosine (i(6)A). In Geobacter sulfurreducens (strain ATCC 51573 / DSM 12127 / PCA), this protein is tRNA dimethylallyltransferase.